A 471-amino-acid chain; its full sequence is ATP synthase subunit beta (471 aa).

156–163 (GGAGVGKT) is a binding site for ATP.

The protein belongs to the ATPase alpha/beta chains family. In terms of assembly, F-type ATPases have 2 components, CF(1) - the catalytic core - and CF(0) - the membrane proton channel. CF(1) has five subunits: alpha(3), beta(3), gamma(1), delta(1), epsilon(1). CF(0) has three main subunits: a(1), b(2) and c(9-12). The alpha and beta chains form an alternating ring which encloses part of the gamma chain. CF(1) is attached to CF(0) by a central stalk formed by the gamma and epsilon chains, while a peripheral stalk is formed by the delta and b chains.

The protein resides in the cell membrane. It catalyses the reaction ATP + H2O + 4 H(+)(in) = ADP + phosphate + 5 H(+)(out). In terms of biological role, produces ATP from ADP in the presence of a proton gradient across the membrane. The catalytic sites are hosted primarily by the beta subunits. The sequence is that of ATP synthase subunit beta from Mycoplasmoides gallisepticum (strain R(low / passage 15 / clone 2)) (Mycoplasma gallisepticum).